We begin with the raw amino-acid sequence, 49 residues long: Large ribosomal subunit protein bL33B (49 aa).

Belongs to the bacterial ribosomal protein bL33 family.

The chain is Large ribosomal subunit protein bL33B from Staphylococcus saprophyticus subsp. saprophyticus (strain ATCC 15305 / DSM 20229 / NCIMB 8711 / NCTC 7292 / S-41).